The chain runs to 429 residues: Adenosylhomocysteinase (429 aa).

Substrate-binding residues include Thr64, Asp136, and Glu161. 162 to 164 (TTT) contacts NAD(+). Lys191 and Asp195 together coordinate substrate. Residues Asn196, 225–230 (GYGWCG), Glu248, Asn283, 304–306 (SGH), and Asn351 contribute to the NAD(+) site.

Belongs to the adenosylhomocysteinase family. Requires NAD(+) as cofactor.

It localises to the cytoplasm. The enzyme catalyses S-adenosyl-L-homocysteine + H2O = L-homocysteine + adenosine. The protein operates within amino-acid biosynthesis; L-homocysteine biosynthesis; L-homocysteine from S-adenosyl-L-homocysteine: step 1/1. Functionally, may play a key role in the regulation of the intracellular concentration of adenosylhomocysteine. The sequence is that of Adenosylhomocysteinase from Thermosynechococcus vestitus (strain NIES-2133 / IAM M-273 / BP-1).